Here is a 158-residue protein sequence, read N- to C-terminus: NAD(P)H-quinone oxidoreductase subunit N (158 aa).

The protein belongs to the complex I NdhN subunit family. In terms of assembly, NDH-1 can be composed of about 15 different subunits; different subcomplexes with different compositions have been identified which probably have different functions.

The protein localises to the cellular thylakoid membrane. It catalyses the reaction a plastoquinone + NADH + (n+1) H(+)(in) = a plastoquinol + NAD(+) + n H(+)(out). The enzyme catalyses a plastoquinone + NADPH + (n+1) H(+)(in) = a plastoquinol + NADP(+) + n H(+)(out). Its function is as follows. NDH-1 shuttles electrons from an unknown electron donor, via FMN and iron-sulfur (Fe-S) centers, to quinones in the respiratory and/or the photosynthetic chain. The immediate electron acceptor for the enzyme in this species is believed to be plastoquinone. Couples the redox reaction to proton translocation, and thus conserves the redox energy in a proton gradient. Cyanobacterial NDH-1 also plays a role in inorganic carbon-concentration. The protein is NAD(P)H-quinone oxidoreductase subunit N of Microcystis aeruginosa (strain NIES-843 / IAM M-2473).